Here is a 687-residue protein sequence, read N- to C-terminus: Glycine--tRNA ligase beta subunit (687 aa).

It belongs to the class-II aminoacyl-tRNA synthetase family. Tetramer of two alpha and two beta subunits.

The protein localises to the cytoplasm. It carries out the reaction tRNA(Gly) + glycine + ATP = glycyl-tRNA(Gly) + AMP + diphosphate. The protein is Glycine--tRNA ligase beta subunit of Neisseria gonorrhoeae (strain ATCC 700825 / FA 1090).